Here is a 261-residue protein sequence, read N- to C-terminus: Phosphatidylglycerol--prolipoprotein diacylglyceryl transferase (261 aa).

The next 3 helical transmembrane spans lie at 20–40, 54–74, and 94–114; these read LAIH…VWLA, IIDF…LYYV, and GGGA…VFSY. Residue arginine 139 participates in a 1,2-diacyl-sn-glycero-3-phospho-(1'-sn-glycerol) binding. Transmembrane regions (helical) follow at residues 175–195, 205–225, and 235–255; these read MPTF…VMVF, GDIF…VEGM, and ARVS…LFIY.

It belongs to the Lgt family.

Its subcellular location is the cell membrane. It catalyses the reaction L-cysteinyl-[prolipoprotein] + a 1,2-diacyl-sn-glycero-3-phospho-(1'-sn-glycerol) = an S-1,2-diacyl-sn-glyceryl-L-cysteinyl-[prolipoprotein] + sn-glycerol 1-phosphate + H(+). The protein operates within protein modification; lipoprotein biosynthesis (diacylglyceryl transfer). Catalyzes the transfer of the diacylglyceryl group from phosphatidylglycerol to the sulfhydryl group of the N-terminal cysteine of a prolipoprotein, the first step in the formation of mature lipoproteins. This chain is Phosphatidylglycerol--prolipoprotein diacylglyceryl transferase, found in Lactococcus lactis subsp. lactis (strain IL1403) (Streptococcus lactis).